Reading from the N-terminus, the 258-residue chain is MKWKLRKSLKIANSVAFTYMVRFPDKSFYIGFKKFKTIYGKDTNWKEYNSSSKLVKEKLKDYKAKWIILQVFDSYESALKHEEMLIRKYFNNEFILNKSIGGYKFNKYPDSEEHKQKLSNAHKGKILSLKHKDKIREKLIEHYKNNSRSEAHVKNNIGSRTAKKTVSIALKSGNKFRSFKSAAKFLKCSEEQVSNHPNVIDIKITIHPVPEYVKINDNIYKSFVDAAKDLKLHPSRIKDLCLDDNYPNYIVSYKRVEK.

Positions 14–96 (SVAFTYMVRF…RKYFNNEFIL (83 aa)) constitute a GIY-YIG domain.

Functionally, this endonuclease is specific to the nrdD gene splice junction and is involved in intron homing. This chain is Intron-associated endonuclease 2 (ITEVIIR), found in Escherichia coli (Bacteriophage T4).